Consider the following 162-residue polypeptide: Phosphopantetheine adenylyltransferase (162 aa).

Serine 9 serves as a coordination point for substrate. ATP is bound by residues 9-10 (SF) and histidine 17. Lysine 41, leucine 73, and lysine 87 together coordinate substrate. ATP contacts are provided by residues 88-90 (GLR), glutamate 98, and 123-129 (CSFLSSS).

Belongs to the bacterial CoaD family. Homohexamer. It depends on Mg(2+) as a cofactor.

The protein localises to the cytoplasm. The catalysed reaction is (R)-4'-phosphopantetheine + ATP + H(+) = 3'-dephospho-CoA + diphosphate. The protein operates within cofactor biosynthesis; coenzyme A biosynthesis; CoA from (R)-pantothenate: step 4/5. In terms of biological role, reversibly transfers an adenylyl group from ATP to 4'-phosphopantetheine, yielding dephospho-CoA (dPCoA) and pyrophosphate. The sequence is that of Phosphopantetheine adenylyltransferase from Natranaerobius thermophilus (strain ATCC BAA-1301 / DSM 18059 / JW/NM-WN-LF).